The sequence spans 144 residues: Putative sugar phosphate isomerase RT0290 (144 aa).

Residue His12 coordinates substrate. His101 serves as the catalytic Proton donor. Arg135 is a binding site for substrate.

Belongs to the LacAB/RpiB family.

The sequence is that of Putative sugar phosphate isomerase RT0290 from Rickettsia typhi (strain ATCC VR-144 / Wilmington).